The chain runs to 238 residues: Ribonuclease PH (238 aa).

Residues R86 and G124–R126 contribute to the phosphate site.

It belongs to the RNase PH family. Homohexameric ring arranged as a trimer of dimers.

It catalyses the reaction tRNA(n+1) + phosphate = tRNA(n) + a ribonucleoside 5'-diphosphate. Phosphorolytic 3'-5' exoribonuclease that plays an important role in tRNA 3'-end maturation. Removes nucleotide residues following the 3'-CCA terminus of tRNAs; can also add nucleotides to the ends of RNA molecules by using nucleoside diphosphates as substrates, but this may not be physiologically important. Probably plays a role in initiation of 16S rRNA degradation (leading to ribosome degradation) during starvation. This Actinobacillus succinogenes (strain ATCC 55618 / DSM 22257 / CCUG 43843 / 130Z) protein is Ribonuclease PH.